We begin with the raw amino-acid sequence, 442 residues long: 5-methylthioadenosine/S-adenosylhomocysteine deaminase (442 aa).

His70 and His72 together coordinate Zn(2+). The substrate site is built by Glu99 and His191. His218 lines the Zn(2+) pocket. 2 residues coordinate substrate: Glu221 and Asp306. A Zn(2+)-binding site is contributed by Asp306.

It belongs to the metallo-dependent hydrolases superfamily. MTA/SAH deaminase family. The cofactor is Zn(2+).

It catalyses the reaction S-adenosyl-L-homocysteine + H2O + H(+) = S-inosyl-L-homocysteine + NH4(+). It carries out the reaction S-methyl-5'-thioadenosine + H2O + H(+) = S-methyl-5'-thioinosine + NH4(+). Its function is as follows. Catalyzes the deamination of 5-methylthioadenosine and S-adenosyl-L-homocysteine into 5-methylthioinosine and S-inosyl-L-homocysteine, respectively. Is also able to deaminate adenosine. In Nitratidesulfovibrio vulgaris (strain DP4) (Desulfovibrio vulgaris), this protein is 5-methylthioadenosine/S-adenosylhomocysteine deaminase.